A 364-amino-acid chain; its full sequence is Phosphoserine aminotransferase (364 aa).

R46 is a binding site for L-glutamate. Residues 80-81, W106, T157, D176, and Q199 each bind pyridoxal 5'-phosphate; that span reads AR. K200 carries the post-translational modification N6-(pyridoxal phosphate)lysine. A pyridoxal 5'-phosphate-binding site is contributed by 241-242; that stretch reads NT.

Belongs to the class-V pyridoxal-phosphate-dependent aminotransferase family. SerC subfamily. In terms of assembly, homodimer. Pyridoxal 5'-phosphate is required as a cofactor.

Its subcellular location is the cytoplasm. The enzyme catalyses O-phospho-L-serine + 2-oxoglutarate = 3-phosphooxypyruvate + L-glutamate. It carries out the reaction 4-(phosphooxy)-L-threonine + 2-oxoglutarate = (R)-3-hydroxy-2-oxo-4-phosphooxybutanoate + L-glutamate. It functions in the pathway amino-acid biosynthesis; L-serine biosynthesis; L-serine from 3-phospho-D-glycerate: step 2/3. The protein operates within cofactor biosynthesis; pyridoxine 5'-phosphate biosynthesis; pyridoxine 5'-phosphate from D-erythrose 4-phosphate: step 3/5. In terms of biological role, catalyzes the reversible conversion of 3-phosphohydroxypyruvate to phosphoserine and of 3-hydroxy-2-oxo-4-phosphonooxybutanoate to phosphohydroxythreonine. The sequence is that of Phosphoserine aminotransferase from Vibrio parahaemolyticus serotype O3:K6 (strain RIMD 2210633).